A 221-amino-acid chain; its full sequence is GFP-like non-fluorescent chromoprotein (221 aa).

Residues 62–64 constitute a cross-link (2-iminomethyl-5-imidazolinone (Gln-Gly)); sequence QYG. Position 63 is a 2,3-didehydrotyrosine (Y63).

It belongs to the GFP family. Homotetramer. Post-translationally, contains a chromophore consisting of modified amino acid residues. The chromophore is formed by autocatalytic backbone condensation between Xaa-N and Gly-(N+2), oxidation of Tyr-(N+1) to didehydrotyrosine, and formation of a double bond to the alpha-amino nitrogen of residue Xaa-N. Maturation of the chromophore requires nothing other than molecular oxygen. The precise stereochemistry of the tyrosine has not been determined.

In terms of biological role, non-fluorescent pigment protein that is lilac in color. This is GFP-like non-fluorescent chromoprotein from Goniopora tenuidens (Anemone coral).